A 257-amino-acid polypeptide reads, in one-letter code: Photosystem I chlorophyll a/b-binding protein 2, chloroplastic (257 aa).

A chloroplast-targeting transit peptide spans 1 to 43 (MASSLCASSAIAAISSPSFLGGKKLRLKKKLTVPAVSRPDASV). Residue W55 coordinates chlorophyll b. 3 residues coordinate chlorophyll a: F75, S81, and E94. Position 99 (R99) interacts with chlorophyll b. 2 helical membrane passes run 100–120 (WAML…IGIL) and 133–153 (YFTD…WAEG). 2 residues coordinate chlorophyll b: E152 and R155. K208, E209, N212, R214, Q226, and H241 together coordinate chlorophyll a. The helical transmembrane segment at 215-235 (LAMLAVMGAWFQHIYTGTGPI) threads the bilayer.

This sequence belongs to the light-harvesting chlorophyll a/b-binding (LHC) protein family. As to quaternary structure, the LHC complex consists of chlorophyll a-b binding proteins. Red-emitting heterodimers with LHCA3 and LHCA5. Binds to carotenoids. Requires Binds at least 14 chlorophylls (8 Chl-a and 6 Chl-b) and carotenoids such as lutein and neoxanthin. as cofactor. Photoregulated by reversible phosphorylation of its threonine residues.

The protein localises to the plastid. It is found in the chloroplast thylakoid membrane. In terms of biological role, the light-harvesting complex (LHC) functions as a light receptor, it captures and delivers excitation energy to photosystems with which it is closely associated, here photosystem I. The protein is Photosystem I chlorophyll a/b-binding protein 2, chloroplastic of Arabidopsis thaliana (Mouse-ear cress).